Here is a 125-residue protein sequence, read N- to C-terminus: Small ribosomal subunit protein uS13 (125 aa).

The interval Gly95–Lys125 is disordered. Positions Thr105 to Lys125 are enriched in basic residues.

Belongs to the universal ribosomal protein uS13 family. As to quaternary structure, part of the 30S ribosomal subunit. Forms a loose heterodimer with protein S19. Forms two bridges to the 50S subunit in the 70S ribosome.

In terms of biological role, located at the top of the head of the 30S subunit, it contacts several helices of the 16S rRNA. In the 70S ribosome it contacts the 23S rRNA (bridge B1a) and protein L5 of the 50S subunit (bridge B1b), connecting the 2 subunits; these bridges are implicated in subunit movement. Contacts the tRNAs in the A and P-sites. The protein is Small ribosomal subunit protein uS13 of Leptospira interrogans serogroup Icterohaemorrhagiae serovar copenhageni (strain Fiocruz L1-130).